We begin with the raw amino-acid sequence, 662 residues long: Polyunsaturated fatty acid (12S)/(13S)-lipoxygenase, epidermal-type (662 aa).

One can recognise a PLAT domain in the interval 2-114; that stretch reads VKYKILVATG…TICLTEGTAL (113 aa). Positions 115 to 662 constitute a Lipoxygenase domain; the sequence is KVTDDTQNLF…PSLVENSVTI (548 aa). Fe cation-binding residues include H360, H365, H540, and I662.

It belongs to the lipoxygenase family. Requires Fe cation as cofactor. In terms of tissue distribution, expressed in epidermis.

The protein resides in the cytoplasm. The catalysed reaction is (5Z,8Z,11Z,14Z)-eicosatetraenoate + O2 = (12S)-hydroperoxy-(5Z,8Z,10E,14Z)-eicosatetraenoate. It carries out the reaction 1-O-methyl-(9Z,12Z)-octadecadienoate + O2 = 1-O-methyl-(13S)-hydroperoxy-(9Z,11E)-octadecadienoate. The enzyme catalyses (8Z,11Z,14Z)-eicosatrienoate + O2 = (12S)-hydroperoxy-(8Z,10E,14Z)-eicosatrienoate. It catalyses the reaction (5Z,8Z,11Z)-eicosatrienoate + O2 = (12S)-hydroperoxy-(5Z,8Z,10E)-eicosatrienoate. The catalysed reaction is 1-O-methyl-(5Z,8Z,11Z,14Z)-eicosatetraenoate + O2 = 1-O-methyl-(12S)-hydroperoxy-(5Z,8Z,10E,14Z)-eicosatetraenoate. It carries out the reaction (9Z,12Z)-octadecadienoate + O2 = (13S)-hydroperoxy-(9Z,11E)-octadecadienoate. The enzyme catalyses (4Z,7Z,10Z,13Z,16Z,19Z)-docosahexaenoate + O2 = (14S)-hydroperoxy-(4Z,7Z,10Z,12E,16Z,19Z)-docosahexaenoate. It participates in lipid metabolism; hydroperoxy eicosatetraenoic acid biosynthesis. Its activity is regulated as follows. Arachidonate 12-lipoxygenase activity is decreased when the pH decreases from 7.4 to 6.0. Functionally, catalyzes the regio and stereo-specific incorporation of a single molecule of dioxygen into free and esterified polyunsaturated fatty acids generating lipid hydroperoxides that can be further reduced to the corresponding hydroxy species. Shows increasing catalytic activity within the series arachidonic acid &lt; 5,8,11-eicosatrienoic acid &lt; linoleic acid &lt; 8,11,14-eicosatrienoic acid. The chain is Polyunsaturated fatty acid (12S)/(13S)-lipoxygenase, epidermal-type from Mus musculus (Mouse).